Reading from the N-terminus, the 132-residue chain is Small ribosomal subunit protein uS8 (132 aa).

This sequence belongs to the universal ribosomal protein uS8 family. As to quaternary structure, part of the 30S ribosomal subunit. Contacts proteins S5 and S12.

In terms of biological role, one of the primary rRNA binding proteins, it binds directly to 16S rRNA central domain where it helps coordinate assembly of the platform of the 30S subunit. In Pseudarthrobacter chlorophenolicus (strain ATCC 700700 / DSM 12829 / CIP 107037 / JCM 12360 / KCTC 9906 / NCIMB 13794 / A6) (Arthrobacter chlorophenolicus), this protein is Small ribosomal subunit protein uS8.